Reading from the N-terminus, the 168-residue chain is 6-pyruvoyl tetrahydrobiopterin synthase (168 aa).

Residue His19 participates in Zn(2+) binding. Residue Cys38 is the Proton acceptor of the active site. His44 and His46 together coordinate Zn(2+). Catalysis depends on charge relay system residues His85 and Glu130. Ser159 is subject to Phosphoserine. At Thr161 the chain carries Phosphothreonine. Residues Ser164, Ser165, and Ser167 each carry the phosphoserine modification.

Belongs to the PTPS family. In terms of assembly, homohexamer formed of two homotrimers in a head to head fashion. Zn(2+) is required as a cofactor.

The catalysed reaction is 7,8-dihydroneopterin 3'-triphosphate = 6-pyruvoyl-5,6,7,8-tetrahydropterin + triphosphate + H(+). Its pathway is cofactor biosynthesis; tetrahydrobiopterin biosynthesis; tetrahydrobiopterin from 7,8-dihydroneopterin triphosphate: step 1/3. Its function is as follows. Required for pigment and biopterin synthesis. The chain is 6-pyruvoyl tetrahydrobiopterin synthase (pr) from Drosophila melanogaster (Fruit fly).